The chain runs to 247 residues: Cell division protein ZapD (247 aa).

Belongs to the ZapD family. In terms of assembly, interacts with FtsZ.

It is found in the cytoplasm. In terms of biological role, cell division factor that enhances FtsZ-ring assembly. Directly interacts with FtsZ and promotes bundling of FtsZ protofilaments, with a reduction in FtsZ GTPase activity. In Shigella dysenteriae serotype 1 (strain Sd197), this protein is Cell division protein ZapD.